A 446-amino-acid polypeptide reads, in one-letter code: tRNA modification GTPase MnmE (446 aa).

(6S)-5-formyl-5,6,7,8-tetrahydrofolate is bound by residues R24, E81, and K120. Residues 216–368 form the TrmE-type G domain; the sequence is GLHAVLIGPP…LHTRLRELAL (153 aa). Residue N226 coordinates K(+). GTP contacts are provided by residues 226–231, 245–251, and 270–273; these read NAGKSS, TDVAGTT, and DTAG. S230 is a Mg(2+) binding site. K(+) is bound by residues T245, V247, and T250. Position 251 (T251) interacts with Mg(2+). K446 provides a ligand contact to (6S)-5-formyl-5,6,7,8-tetrahydrofolate.

It belongs to the TRAFAC class TrmE-Era-EngA-EngB-Septin-like GTPase superfamily. TrmE GTPase family. As to quaternary structure, homodimer. Heterotetramer of two MnmE and two MnmG subunits. Requires K(+) as cofactor.

It is found in the cytoplasm. Its function is as follows. Exhibits a very high intrinsic GTPase hydrolysis rate. Involved in the addition of a carboxymethylaminomethyl (cmnm) group at the wobble position (U34) of certain tRNAs, forming tRNA-cmnm(5)s(2)U34. This is tRNA modification GTPase MnmE from Xanthomonas campestris pv. campestris (strain 8004).